The sequence spans 442 residues: Tryptophan synthase beta chain 2 (442 aa).

Lys-122 carries the post-translational modification N6-(pyridoxal phosphate)lysine.

It belongs to the TrpB family. In terms of assembly, tetramer of two alpha and two beta chains. Pyridoxal 5'-phosphate serves as cofactor.

It carries out the reaction (1S,2R)-1-C-(indol-3-yl)glycerol 3-phosphate + L-serine = D-glyceraldehyde 3-phosphate + L-tryptophan + H2O. Its pathway is amino-acid biosynthesis; L-tryptophan biosynthesis; L-tryptophan from chorismate: step 5/5. Its function is as follows. The beta subunit is responsible for the synthesis of L-tryptophan from indole and L-serine. The chain is Tryptophan synthase beta chain 2 (trpB2) from Methanosarcina acetivorans (strain ATCC 35395 / DSM 2834 / JCM 12185 / C2A).